We begin with the raw amino-acid sequence, 391 residues long: MAKSKFERNKPHVNIGTIGHVDHGKTSLTAAITKYFGEFKAYDQIDAAPEEKARGITISTAHVEYETPNRHYAHVDCPGHADYVKNMITGAAQMDGAILVVSAADGPMPQTREHILLARQVGVPAIVVFLNKVDQVDDAELLELVELEVRELLSSYEFPGDDIPIVKGSALAALEDSDKKIGEDAIRELMAAVDAYIPTPERPIDQPFLMPIEDVFSISGRGTVVTGRVERGIVKVGEEIEIVGIRPTTKTTCTGVEMFRKLLDQGQAGDNIGALLRGVDRNGVERGQILCKPGSVKPHRKFKAEAYILTKEEGGRHTPFFTNYRPQFYFRTTDVTGIVTLPEGTEMVMPGDNVTVDVELIVPIAMEEKLRFAIREGGRTVGAGIVASIVE.

A tr-type G domain is found at 10 to 201 (KPHVNIGTIG…AVDAYIPTPE (192 aa)). The segment at 19–26 (GHVDHGKT) is G1. 19–26 (GHVDHGKT) lines the GTP pocket. Threonine 26 is a binding site for Mg(2+). Residues 55–59 (GITIS) form a G2 region. The interval 76–79 (DCPG) is G3. Residues 76–80 (DCPGH) and 131–134 (NKVD) each bind GTP. The G4 stretch occupies residues 131–134 (NKVD). Residues 169-171 (SAL) are G5.

The protein belongs to the TRAFAC class translation factor GTPase superfamily. Classic translation factor GTPase family. EF-Tu/EF-1A subfamily. In terms of assembly, monomer.

It is found in the cytoplasm. The enzyme catalyses GTP + H2O = GDP + phosphate + H(+). Its function is as follows. GTP hydrolase that promotes the GTP-dependent binding of aminoacyl-tRNA to the A-site of ribosomes during protein biosynthesis. This Rhizobium meliloti (strain 1021) (Ensifer meliloti) protein is Elongation factor Tu.